A 791-amino-acid chain; its full sequence is Probable potassium transporter 11 (791 aa).

The Cytoplasmic portion of the chain corresponds to 1–49 (MASLSESEGTNRGSMWELDQNLDQPMDEEASRLKNMYREKKFSSLLLLR). Residues 50–70 (LAFQSLGVVFGDLGTSPLYVF) traverse the membrane as a helical segment. The Extracellular segment spans residues 71–87 (YNAFPHGVDDEEDVIGA). Residues 88–108 (LSLIIYTLTLIPLLKYVFVVL) form a helical membrane-spanning segment. The Cytoplasmic portion of the chain corresponds to 109-175 (RANDNGQGGT…EAHAYKRNCL (67 aa)). Residues 176–196 (LIVVLIGTCTAIGDGILTPAI) form a helical membrane-spanning segment. Topologically, residues 197–215 (SVLSASGGIKVQNPNMSTD) are extracellular. Asn-211 carries an N-linked (GlcNAc...) asparagine glycan. The chain crosses the membrane as a helical span at residues 216 to 236 (VVVIVSVIILIGLFSMQHYGT). The Cytoplasmic segment spans residues 237-238 (DK). A helical transmembrane segment spans residues 239–259 (VGWLFAPIVLLWFILIGSVGA). The Extracellular portion of the chain corresponds to 260–289 (LNIHKYKGSVLKAYNPVYIYRYFQRRNSDS). A helical membrane pass occupies residues 290–310 (WASLGGIMLSITGTEALFADL). Over 311–315 (CHFPV) the chain is Cytoplasmic. The helical transmembrane segment at 316-338 (FAIQIAFTLIVFPCLLLAYTGQA) threads the bilayer. The Extracellular segment spans residues 339-359 (AYIIAHKDHVADAFYRSIPDS). The chain crosses the membrane as a helical span at residues 360–380 (IYWPAFVIATAAAIVASQATI). The Cytoplasmic segment spans residues 381–411 (SATYSIIKQALALGCFPRVKIVHTSKKFLGQ). Residues 412 to 432 (IYIPDINWVLLILCIAVTAGF) traverse the membrane as a helical segment. Over 433–444 (KNQSQIGNAYGT) the chain is Extracellular. Asn-434 is a glycosylation site (N-linked (GlcNAc...) asparagine). A helical membrane pass occupies residues 445-465 (AVVIVMLVTTFLMVPIMLLVW). The Cytoplasmic portion of the chain corresponds to 466 to 468 (KSH). A helical membrane pass occupies residues 469-489 (WILVVTFIVLSLMVEIPYFSA). Over 490–496 (CLLKIDQ) the chain is Extracellular. The chain crosses the membrane as a helical span at residues 497 to 517 (GGWVPLVIATAFFIIMYVWHF). Topologically, residues 518–791 (CTVKRYEFEM…LLNVGQIYYI (274 aa)) are cytoplasmic.

This sequence belongs to the HAK/KUP transporter (TC 2.A.72.3) family.

Its subcellular location is the membrane. Its function is as follows. High-affinity potassium transporter. The polypeptide is Probable potassium transporter 11 (Oryza sativa subsp. japonica (Rice)).